The primary structure comprises 47 residues: Delta-halcutoxin-Hcg1a (47 aa).

3 cysteine pairs are disulfide-bonded: cysteine 3–cysteine 43, cysteine 5–cysteine 33, and cysteine 26–cysteine 44.

Belongs to the sea anemone sodium channel inhibitory toxin family. Type II subfamily.

Its subcellular location is the secreted. The protein localises to the nematocyst. Is potently lethal to crabs, although it showed neither lethal activity in mice nor hemolytic activity. May bind to voltage-gated sodium channels (Nav), thereby delaying their inactivation during signal transduction. This is Delta-halcutoxin-Hcg1a from Isohalcurias carlgreni (Sea anemone).